We begin with the raw amino-acid sequence, 305 residues long: Ribonuclease BN (305 aa).

His64, His66, Asp68, His69, His141, Asp212, and His270 together coordinate Zn(2+). The active-site Proton acceptor is the Asp68.

Belongs to the RNase Z family. RNase BN subfamily. In terms of assembly, homodimer. Zn(2+) serves as cofactor.

In terms of biological role, zinc phosphodiesterase, which has both exoribonuclease and endoribonuclease activities. The protein is Ribonuclease BN of Shigella flexneri.